Here is a 135-residue protein sequence, read N- to C-terminus: Large ribosomal subunit protein mL41B (135 aa).

The N-terminal 13 residues, 1–13 (MGLITKIARGLVR), are a transit peptide targeting the mitochondrion.

The protein belongs to the mitochondrion-specific ribosomal protein mL41 family. As to quaternary structure, component of the mitochondrial ribosome large subunit (39S) which comprises a 16S rRNA and about 50 distinct proteins.

It localises to the mitochondrion. Functionally, component of the mitochondrial ribosome large subunit. Also involved in apoptosis and cell cycle. This Xenopus laevis (African clawed frog) protein is Large ribosomal subunit protein mL41B (mrpl41-b).